Reading from the N-terminus, the 1641-residue chain is Lysine-specific demethylase 6B (1641 aa).

Disordered regions lie at residues 42–89, 188–682, 704–808, and 824–1085; these read LPGG…LHGK, YGAK…PLED, LDES…LLKS, and GAAV…VSRA. A compositionally biased stretch (low complexity) spans 214 to 223; sequence LSGPSGEEGL. The residue at position 224 (S224) is a Phosphoserine. The span at 242 to 268 shows a compositional bias: pro residues; sequence PGLPLPPPPPPPPPPPPPPPPPPPPLP. The span at 293–309 shows a compositional bias: basic and acidic residues; sequence GPERKGSAPPERQEQRH. Residues 312–326 are compositionally biased toward low complexity; the sequence is PHSYPYPAPAYSAHP. A compositionally biased stretch (basic and acidic residues) spans 361–372; sequence DLRESRVQRSRM. Residues 396–415 are compositionally biased toward low complexity; it reads PGTSSSSSSSSSSNNTGLRG. Residues 467–488 show a composition bias toward pro residues; the sequence is PGTPSSPPPPCPRLLRPPPPPA. The segment covering 552 to 568 has biased composition (low complexity); that stretch reads TTTSSSSSSNSHSSSPT. Composition is skewed to pro residues over residues 597–613 and 645–660; these read QDPP…PAPP and GPPP…PVPP. The segment covering 704–713 has biased composition (basic and acidic residues); sequence LDESIRKEEE. The span at 743–766 shows a compositional bias: low complexity; that stretch reads TAPATTTAAPTTATTTTTTTTTTT. Positions 774-801 are enriched in pro residues; it reads PPALPPPPPLAKFPPPPQPQPPPPPPAS. Low complexity predominate over residues 855–879; it reads VAPSAQGSPKPSVSSSSQFSTSGGP. The segment covering 891–908 has biased composition (pro residues); that stretch reads APGPVTPAQLPPPLPLPP. The span at 918–931 shows a compositional bias: basic and acidic residues; the sequence is EISRACETLVERVG. Residues 974-987 are compositionally biased toward basic residues; that stretch reads GKRRQKEHRRHRRA. The segment covering 988–1001 has biased composition (basic and acidic residues); that stretch reads CRDSVGRRPREGRA. Over residues 1002–1014 the composition is skewed to basic residues; the sequence is KAKAKAPKEKSRR. The span at 1047–1066 shows a compositional bias: pro residues; sequence APAPPPAPAPAAQPTPPSAP. K1107 participates in a covalent cross-link: Glycyl lysine isopeptide (Lys-Gly) (interchain with G-Cter in SUMO2). Residues 1286–1323 form a disordered region; it reads FQESLQEERESEDEESEEPDSTTGTSPSSAPDPKNHHI. The segment covering 1294–1305 has biased composition (acidic residues); it reads RESEDEESEEPD. Positions 1306-1317 are enriched in low complexity; sequence STTGTSPSSAPD. Positions 1337 to 1500 constitute a JmjC domain; that stretch reads RWKPQLQELL…YQLALERYEW (164 aa). Fe cation is bound by residues H1388, E1390, and H1468. 4 residues coordinate Zn(2+): C1573, C1576, C1600, and C1603.

The protein belongs to the UTX family. In terms of assembly, interacts with TLE1. Component of the MLL4 complex, at least composed of KMT2B/MLL4, ASH2L, RBBP5, WDR5, and KDM6B. Interacts with TBX21, SMARCA4, SMARCC1 and SMARCC2. L-ascorbate serves as cofactor. Requires Fe(2+) as cofactor.

The protein resides in the nucleus. The enzyme catalyses N(6),N(6),N(6)-trimethyl-L-lysyl(27)-[histone H3] + 2 2-oxoglutarate + 2 O2 = N(6)-methyl-L-lysyl(27)-[histone H3] + 2 formaldehyde + 2 succinate + 2 CO2. Its function is as follows. Histone demethylase that specifically demethylates 'Lys-27' of histone H3, thereby playing a central role in histone code. Demethylates trimethylated and dimethylated H3 'Lys-27'. Plays a central role in regulation of posterior development, by regulating HOX gene expression. Involved in inflammatory response by participating in macrophage differentiation in case of inflammation by regulating gene expression and macrophage differentiation. Plays a demethylase-independent role in chromatin remodeling to regulate T-box family member-dependent gene expression by acting as a link between T-box factors and the SMARCA4-containing SWI/SNF remodeling complex. The protein is Lysine-specific demethylase 6B (Kdm6b) of Mus musculus (Mouse).